Reading from the N-terminus, the 2637-residue chain is Nonribisomal peptide synthetase valB (2637 aa).

A condensation 1 region spans residues 1 to 376 (MADGADYTQR…KALIRSPPST (376 aa)). The tract at residues 413-803 (SQASRRPDAA…VGRRDNQIKL (391 aa)) is adenylation 1. The 77-residue stretch at 946–1022 (PPANPPERAL…EAASEIKEPT (77 aa)) folds into the Carrier 1 domain. At serine 983 the chain carries O-(pantetheine 4'-phosphoryl)serine. The disordered stretch occupies residues 1016–1045 (SEIKEPTDASAPSPSPISRDLPLQKSNHDR). Residues 1063 to 1506 (VEAIYPCTAL…LSRADMSLLQ (444 aa)) form a condensation 2 region. The interval 1524–1933 (AREVAHQRPL…EGRKDTRVKL (410 aa)) is adenylation 2. Positions 2078–2154 (KEVTDDQAFM…YMVSKTSVSN (77 aa)) constitute a Carrier 2 domain. Serine 2115 is subject to O-(pantetheine 4'-phosphoryl)serine. The interval 2193-2582 (ESVAPATDAQ…LWMGAYLDAA (390 aa)) is condensation 3.

Belongs to the NRP synthetase family.

The protein operates within secondary metabolite biosynthesis. Its function is as follows. Nonribisomal peptide synthetase; part of the gene cluster that mediates the biosynthesis of valactamides. The first step of the pathway is performed by the highly reducing polyketide synthase valA that produces the polyketide part of the final products. An acetyl starter unit is incorporated by the ketosynthase domain of valA, and subsequently 6 malonyl-CoA-derived ketide units are incorporated and fully reduced to their respective alkane forms by the action of the ketoreductase, dehydratase, and enoylreductase domains (except for the penultimate unit, which is reduced only to the alkene). The final five ketide units are each proposed to be alpha-methylated by the methyltransferase domain before ketone reduction by the ketoreductase domain. The C1 domain of the nonribisomal peptide synthetase valB then catalyzes amide bond formation between the heptaketide chain and L-valine (L-Val) attached to the T1 domain. The C2 domain incorporating L-isoleucine (L-Ile) then carries out chain elongation, which is followed by macrolactonization by the Ct domain to release the final product. This Aspergillus terreus protein is Nonribisomal peptide synthetase valB.